We begin with the raw amino-acid sequence, 76 residues long: Pigment-dispersing hormone A peptides (76 aa).

Residues 1–20 (MRSAMVVLVLVAMVAVFTRA) form the signal peptide. Ala73 is subject to Alanine amide.

It belongs to the arthropod PDH family. Optical ganglia of the eyestalk.

It is found in the secreted. The pigment-dispersing hormone causes the migration of the distal retinal pigment into the proximal end of the pigment chromatophore cells and thus decreases the amount of light entering the retinulas. May also function as a neurotransmitter and/or neuromodulator. This chain is Pigment-dispersing hormone A peptides, found in Faxonius limosus (Spinycheek crayfish).